We begin with the raw amino-acid sequence, 712 residues long: Matrix metalloproteinase-9 (712 aa).

Residues 1-19 form the signal peptide; the sequence is MSPLQPLVLALLVLACCSA. A propeptide spans 20–106 (activation peptide); it reads VPRRRQPTVV…PRCGVPDVGR (87 aa). A glycan (N-linked (GlcNAc...) asparagine) is linked at asparagine 38. The Cysteine switch signature appears at 97–104; the sequence is PRCGVPDV. Residue cysteine 99 coordinates Zn(2+). Residues asparagine 120 and asparagine 127 are each glycosylated (N-linked (GlcNAc...) asparagine). Positions 131 and 165 each coordinate Ca(2+). Zn(2+) is bound by residues histidine 175 and aspartate 177. Aspartate 182, glycine 183, asparagine 185, and leucine 187 together coordinate Ca(2+). Zn(2+) is bound at residue histidine 190. 3 residues coordinate Ca(2+): glycine 197, glutamine 199, and aspartate 201. Histidine 203 contacts Zn(2+). The Ca(2+) site is built by aspartate 205, aspartate 206, and glutamate 208. Fibronectin type-II domains lie at 225 to 273, 283 to 331, and 342 to 390; these read AKGA…FCPS, ADGK…FCPT, and AAGE…FCPD. Disulfide bonds link cysteine 230–cysteine 256, cysteine 244–cysteine 271, cysteine 288–cysteine 314, cysteine 302–cysteine 329, cysteine 347–cysteine 373, and cysteine 361–cysteine 388. Histidine 401 contacts Zn(2+). Glutamate 402 is a catalytic residue. Histidine 405 and histidine 411 together coordinate Zn(2+). The disordered stretch occupies residues 440-519; sequence QHLYGPRPEP…PTESPDPAED (80 aa). Positions 455-465 are enriched in low complexity; sequence TTTTTTTTEPQ. The span at 491-504 shows a compositional bias: pro residues; it reads TGPPAAGPTGPPTA. Low complexity predominate over residues 505–514; sequence GPSAAPTESP. Cysteine 521 and cysteine 709 are oxidised to a cystine. Hemopexin repeat units lie at residues 523-568, 569-613, 615-662, and 663-709; these read VDIF…WPAL, PRKL…GLGP, VAQV…FPGV, and PIST…LLKC.

The protein belongs to the peptidase M10A family. Exists as monomer or homodimer; disulfide-linked. Also exists as heterodimer with LCN2. Macrophages and transformed cell lines produce only the monomeric form. Interacts with ECM1. Requires Zn(2+) as cofactor. Ca(2+) serves as cofactor. N- and O-glycosylated.

It localises to the secreted. It is found in the extracellular space. The protein resides in the extracellular matrix. It carries out the reaction Cleavage of gelatin types I and V and collagen types IV and V.. In terms of biological role, matrix metalloproteinase that plays an essential role in local proteolysis of the extracellular matrix and in leukocyte migration. Could play a role in bone osteoclastic resorption. Cleaves KiSS1 at a Gly-|-Leu bond. Cleaves NINJ1 to generate the Secreted ninjurin-1 form. Cleaves type IV and type V collagen into large C-terminal three quarter fragments and shorter N-terminal one quarter fragments. Degrades fibronectin but not laminin or Pz-peptide. This chain is Matrix metalloproteinase-9, found in Bos taurus (Bovine).